The sequence spans 475 residues: Ataxin-10 (475 aa).

Omega-N-methylarginine is present on arginine 10. A phosphoserine mark is found at serine 12 and serine 77. The residue at position 82 (threonine 82) is a Phosphothreonine. Position 430 is a phosphoserine (serine 430).

This sequence belongs to the ataxin-10 family. In terms of assembly, homooligomer. Interacts with GNB2. Interacts with IQCB1. Interacts with OGT. Interacts with PLK1. In terms of processing, polyubiquitinated. Post-translationally, phosphorylation at Ser-12 by AURKB promotes the association of ATXN10 with PLK1. Phosphorylation at Ser-77 and Thr-82 by PLK1 may play a role in the regulation of cytokinesis and may stimulate the proteasome-mediated degradation of ATXN10. In terms of tissue distribution, in high cell density areas; cerebellar cortex, dentate gyrus, hippocampus, anterior olfactory nucleus, primary olfactory cortex.

It localises to the cytoplasm. The protein resides in the perinuclear region. It is found in the midbody. The protein localises to the cytoskeleton. Its subcellular location is the cilium basal body. It localises to the microtubule organizing center. The protein resides in the centrosome. It is found in the centriole. May play a role in the regulation of cytokinesis. May play a role in signaling by stimulating protein glycosylation. Induces neuritogenesis by activating the Ras-MAP kinase pathway and is necessary for the survival of cerebellar neurons. Does not appear to play a major role in ciliogenesis. In Mus musculus (Mouse), this protein is Ataxin-10 (Atxn10).